The following is a 161-amino-acid chain: UPF0225 protein HI_0277 (161 aa).

Belongs to the UPF0225 family.

This chain is UPF0225 protein HI_0277, found in Haemophilus influenzae (strain ATCC 51907 / DSM 11121 / KW20 / Rd).